The chain runs to 505 residues: SusD-like protein P2 (505 aa).

Positions 1–17 (MKKYKITFIVLLLTLVG) are cleaved as a signal peptide. A lipid anchor (N-palmitoyl cysteine) is attached at C18. Residue C18 is the site of S-diacylglycerol cysteine attachment.

Belongs to the SusD family.

Its subcellular location is the cell outer membrane. Functionally, polysaccharide-binding protein probably involved in ulvan degradation. Ulvan is the main polysaccharide component of the Ulvales (green seaweed) cell wall. It is composed of disaccharide building blocks comprising 3-sulfated rhamnose (Rha3S) linked to D-glucuronic acid (GlcA), L-iduronic acid (IduA), or D-xylose (Xyl). The SusD-like protein may mediate ulvan oligomer-binding before transport in the periplasm for further degradation. The sequence is that of SusD-like protein P2 from Formosa agariphila (strain DSM 15362 / KCTC 12365 / LMG 23005 / KMM 3901 / M-2Alg 35-1).